We begin with the raw amino-acid sequence, 981 residues long: MDSEPSSGTSVSTTASSTTTTTITTSSSRMQQPQISVYSGSDRHAVQVIQQALHRPPSSAAQYLQQMYAAQQQHLMLHTAALQQQHLSSSQLQSLAAVQASLSSGRPSTSPTGSVTQQSSMSQTSILSASPAPAQLMNRSQTSSSTSGSITQQTMLLGSTSPTLTASQAQMYLRAQMLIFTPATTVAAVQSDIPVVSSSPSPSCQSAAAQVQNLTLRSQKLGVLSSSQNGSPKSAGQTQSLTICHNKTTVTSSKISQRDPSPESKKGGSPGLESRSTAVTRTSSIHQLIAPASYSPIQPHSLIKHQQIPLHSPPPKVSHHQLLLQQQQQQIQPITLQSPSQDPPPSQHCIPLPNHGLSPAPSNAQPQHCSPVQSHPPPLTVSPNQAQSAQQSVVVSPPPPHSPSQSPTIIIHPQALIQPHPLVSSALQTGPNLQQAAADQVQSTAQLNLPSHLPLPASPVVHIGPVQQSALVSPGQQMVSPTSHQQYSALQSSPIPIATPPQMSASPPAQLPPLPLQSMQSLQVQPEILSQGQVLVQNALVSEEELPAAEALVQLPFQTLPPPQTVAVNLQVQPPAPVDPPVVYQVEDVCEEEMPEESDECARMDRTPPPPTLSPAAVTVGRGEDLTSEHPLLEQVELPAVASVSASVIKSPSDPTHASAPAPPLLIPAASTRSSSTSLASSTPSLENKPPQAIVKPQILTHVIEGFVIQEGLEPFPVSRSSLLIEQPVKKRPLLDNQVVNSVCVQPELQNNTKHADNSSDTEIEDMMAEETLEEMDSELLKCEFCGKMGYPNEFLRSKRFCTMSCAKRYNVSCSKKFALSRWNRKPDNQSLGHRGRRPSGPEGAAREHILRQLPITYPSAEEDVASHEDPVPSAMTTRLRRQSERERERELRDVRIRKMPENSDLLPVAQTEPSIWTVDDVWAFIHSLPGCQDVADEFRAQEIDGQALLLLKEDHLMSAMNMKLGPALKICARINSLKDS.

Low complexity predominate over residues 1–28; it reads MDSEPSSGTSVSTTASSTTTTTITTSSS. Disordered stretches follow at residues 1-33, 102-127, 224-280, and 307-407; these read MDSEPSSGTSVSTTASSTTTTTITTSSSRMQQP, LSSGRPSTSPTGSVTQQSSMSQTSIL, LSSS…TAVT, and QIPL…SQSP. A compositionally biased stretch (polar residues) spans 224 to 255; the sequence is LSSSQNGSPKSAGQTQSLTICHNKTTVTSSKI. Residues Ser-231, Ser-261, Ser-269, and Ser-312 each carry the phosphoserine modification. Over residues 256–266 the composition is skewed to basic and acidic residues; sequence SQRDPSPESKK. Residues 321 to 340 show a composition bias toward low complexity; the sequence is QLLLQQQQQQIQPITLQSPS. The segment covering 360 to 373 has biased composition (polar residues); it reads APSNAQPQHCSPVQ. Low complexity predominate over residues 381–395; the sequence is VSPNQAQSAQQSVVV. A phosphothreonine mark is found at Thr-607 and Thr-612. Residue Ser-614 is modified to Phosphoserine. The segment at 650-690 is disordered; that stretch reads KSPSDPTHASAPAPPLLIPAASTRSSSTSLASSTPSLENKP. Residues 667–686 are compositionally biased toward low complexity; sequence IPAASTRSSSTSLASSTPSL. Glycyl lysine isopeptide (Lys-Gly) (interchain with G-Cter in SUMO2) cross-links involve residues Lys-689 and Lys-730. Residues 689–718 carry the HD1 motif; that stretch reads KPPQAIVKPQILTHVIEGFVIQEGLEPFPV. 2 positions are modified to phosphoserine: Ser-759 and Ser-760. The FCS-type zinc finger occupies 774–808; sequence EEMDSELLKCEFCGKMGYPNEFLRSKRFCTMSCAK. 4 residues coordinate Zn(2+): Cys-783, Cys-786, Cys-802, and Cys-806. A Glycyl lysine isopeptide (Lys-Gly) (interchain with G-Cter in SUMO2) cross-link involves residue Lys-808. Disordered stretches follow at residues 825-844 and 863-888; these read RKPDNQSLGHRGRRPSGPEG and EDVASHEDPVPSAMTTRLRRQSERER. Residues 917 to 981 enclose the SAM domain; that stretch reads WTVDDVWAFI…CARINSLKDS (65 aa).

As to quaternary structure, component of a PRC1-like complex. As to expression, ubiquitous expression.

The protein localises to the nucleus. Functionally, component of a Polycomb group (PcG) multiprotein PRC1-like complex, a complex class required to maintain the transcriptionally repressive state of many genes, including Hox genes, throughout development. PcG PRC1 complex acts via chromatin remodeling and modification of histones; it mediates monoubiquitination of histone H2A 'Lys-119', rendering chromatin heritably changed in its expressibility. This Mus musculus (Mouse) protein is Polyhomeotic-like protein 3 (Phc3).